A 255-amino-acid chain; its full sequence is NADH dehydrogenase [ubiquinone] flavoprotein 2, mitochondrial (255 aa).

The transit peptide at 1 to 35 directs the protein to the mitochondrion; that stretch reads MLARLAAKRLLEIRQVFRQPTSQVTRSLSTALNYH. 4 residues coordinate [2Fe-2S] cluster: cysteine 130, cysteine 135, cysteine 171, and cysteine 175. Residues 214–255 are disordered; sequence RKGEKPPHGTQNPKRIKCGPEGGNKTLLGEPKPPQFRDLDAC.

It belongs to the complex I 24 kDa subunit family. As to quaternary structure, complex I is composed of at least 49 different subunits. This is a component of the flavoprotein-sulfur (FP) fragment of the enzyme. [2Fe-2S] cluster serves as cofactor.

Its subcellular location is the mitochondrion inner membrane. It catalyses the reaction a ubiquinone + NADH + 5 H(+)(in) = a ubiquinol + NAD(+) + 4 H(+)(out). Functionally, core subunit of the mitochondrial membrane respiratory chain NADH dehydrogenase (Complex I) that is believed to belong to the minimal assembly required for catalysis. Complex I functions in the transfer of electrons from NADH to the respiratory chain. The immediate electron acceptor for the enzyme is believed to be ubiquinone. In Arabidopsis thaliana (Mouse-ear cress), this protein is NADH dehydrogenase [ubiquinone] flavoprotein 2, mitochondrial.